The primary structure comprises 137 residues: Basic phospholipase A2 homolog APL-K49 (137 aa).

The first 16 residues, 1 to 16 (MRTLWIVALLLVGVEG), serve as a signal peptide directing secretion. 7 cysteine pairs are disulfide-bonded: C42–C131, C44–C60, C59–C111, C65–C137, C66–C104, C73–C97, and C91–C102. An important for membrane-damaging activities in eukaryotes and bacteria; heparin-binding region spans residues 121–133 (KKYKAYFKLKCKK).

This sequence belongs to the phospholipase A2 family. Group II subfamily. K49 sub-subfamily. In terms of assembly, monomer. In terms of tissue distribution, expressed by the venom gland.

It is found in the secreted. Snake venom phospholipase A2 (PLA2) that lacks enzymatic activity. Does not show antibacterial activity. Is myotoxic and displays edema-inducing activities. A model of myotoxic mechanism has been proposed: an apo Lys49-PLA2 is activated by the entrance of a hydrophobic molecule (e.g. fatty acid) at the hydrophobic channel of the protein leading to a reorientation of a monomer. This reorientation causes a transition between 'inactive' to 'active' states, causing alignment of C-terminal and membrane-docking sites (MDoS) side-by-side and putting the membrane-disruption sites (MDiS) in the same plane, exposed to solvent and in a symmetric position for both monomers. The MDoS region stabilizes the toxin on membrane by the interaction of charged residues with phospholipid head groups. Subsequently, the MDiS region destabilizes the membrane with penetration of hydrophobic residues. This insertion causes a disorganization of the membrane, allowing an uncontrolled influx of ions (i.e. calcium and sodium), and eventually triggering irreversible intracellular alterations and cell death. This Agkistrodon piscivorus leucostoma (Western cottonmouth) protein is Basic phospholipase A2 homolog APL-K49.